The primary structure comprises 543 residues: CTP synthase (543 aa).

The interval 1 to 265 (MTNYIFVTGG…DELVVQRFGL (265 aa)) is amidoligase domain. Residue S13 participates in CTP binding. S13 provides a ligand contact to UTP. Residues 14–19 (SLGKGI) and D71 each bind ATP. Residues D71 and E139 each contribute to the Mg(2+) site. Residues 146–148 (DIE), 186–191 (KTKPTQ), and K222 each bind CTP. Residues 186–191 (KTKPTQ) and K222 each bind UTP. 238-240 (KDA) provides a ligand contact to ATP. The region spanning 290–541 (TIGMVGKYVE…VKAAGEYYKN (252 aa)) is the Glutamine amidotransferase type-1 domain. G351 lines the L-glutamine pocket. C378 acts as the Nucleophile; for glutamine hydrolysis in catalysis. L-glutamine is bound by residues 379-382 (LGMQ), E402, and R469. Residues H514 and E516 contribute to the active site.

This sequence belongs to the CTP synthase family. Homotetramer.

It catalyses the reaction UTP + L-glutamine + ATP + H2O = CTP + L-glutamate + ADP + phosphate + 2 H(+). The enzyme catalyses L-glutamine + H2O = L-glutamate + NH4(+). It carries out the reaction UTP + NH4(+) + ATP = CTP + ADP + phosphate + 2 H(+). The protein operates within pyrimidine metabolism; CTP biosynthesis via de novo pathway; CTP from UDP: step 2/2. With respect to regulation, allosterically activated by GTP, when glutamine is the substrate; GTP has no effect on the reaction when ammonia is the substrate. The allosteric effector GTP functions by stabilizing the protein conformation that binds the tetrahedral intermediate(s) formed during glutamine hydrolysis. Inhibited by the product CTP, via allosteric rather than competitive inhibition. Catalyzes the ATP-dependent amination of UTP to CTP with either L-glutamine or ammonia as the source of nitrogen. Regulates intracellular CTP levels through interactions with the four ribonucleotide triphosphates. This Pseudoalteromonas atlantica (strain T6c / ATCC BAA-1087) protein is CTP synthase.